The primary structure comprises 196 residues: MHRLLLLMMLTALGVAGCGQKKPPDPPNRVPEKKVVETSAFGHHVQLVNREGKAVGFIEIKESDDEGLDIHISANSLRPGASLGFHIYEKGSCVRPDFESAGGPFNPLNKEHGFNNPMGHHAGDLPNLEVGADGKVDVIMNAPDTSLKKGSKLNILDEDGSAFIIHEQADDYLTNPSGNSGARIVCGALLGNNEKQ.

Residues 1–17 form the signal peptide; it reads MHRLLLLMMLTALGVAG. Cys18 carries the N-palmitoyl cysteine lipid modification. Cys18 carries S-diacylglycerol cysteine lipidation. His71 contributes to the Zn(2+) binding site. His86 lines the Cu cation pocket. Cys93 and Cys186 are disulfide-bonded. A Zn(2+)-binding site is contributed by Asp137. Residue His166 participates in Cu cation binding.

It belongs to the Cu-Zn superoxide dismutase family. Monomer, and homodimer. Largely unstructured monomer in solution. Well-ordered homodimer in the crystal. Zn(2+) serves as cofactor.

It localises to the cell membrane. The sequence is that of Superoxide dismutase-like protein YojM (yojM) from Bacillus subtilis (strain 168).